The primary structure comprises 55 residues: Myrmicitoxin(1)-Pr6b (55 aa).

A signal peptide spans 1–22 (MKIIYAFLLIAVVAFMGSGIMA). Residues 23-29 (ESLAEAI) constitute a propeptide that is removed on maturation.

Belongs to the formicidae venom clade 4 family. As to expression, expressed by the venom gland.

The protein localises to the secreted. Its function is as follows. Probable neurotoxin. The protein is Myrmicitoxin(1)-Pr6b of Pogonomyrmex rugosus (Desert harvester ant).